Consider the following 259-residue polypeptide: Anti-Pycsar protein Apyc1 (259 aa).

The interval 21–233 (YNNSALVTFT…KQQNKIFLMH (213 aa)) is beta-lactamase-like. Zn(2+) is bound by residues histidine 64, histidine 66, aspartate 68, histidine 69, histidine 154, aspartate 178, and histidine 233.

This sequence belongs to the anti-Pycsar protein Apyc1 family. As to quaternary structure, homodimer. The cofactor is Zn(2+).

The enzyme catalyses 3',5'-cyclic CMP + H2O = CMP + H(+). It carries out the reaction 3',5'-cyclic UMP + H2O = UMP + H(+). Counteracts the host Pycsar antiviral defense system. Phosphodiesterase that enables metal-dependent hydrolysis of host cyclic nucleotide Pycsar defense signals such as cCMP and cUMP. The protein is Anti-Pycsar protein Apyc1 of Bacillus phage vB_BveM-Goe7.